A 294-amino-acid polypeptide reads, in one-letter code: Diaminopimelate epimerase (294 aa).

Substrate-binding residues include Asn-13, Gln-46, and Asn-69. Cys-78 serves as the catalytic Proton donor. Substrate is bound by residues 79–80 (GN), Asn-173, Asn-206, and 224–225 (ER). Residue Cys-233 is the Proton acceptor of the active site. 234 to 235 (GT) provides a ligand contact to substrate.

Belongs to the diaminopimelate epimerase family. As to quaternary structure, homodimer.

It localises to the cytoplasm. It carries out the reaction (2S,6S)-2,6-diaminopimelate = meso-2,6-diaminopimelate. It participates in amino-acid biosynthesis; L-lysine biosynthesis via DAP pathway; DL-2,6-diaminopimelate from LL-2,6-diaminopimelate: step 1/1. In terms of biological role, catalyzes the stereoinversion of LL-2,6-diaminopimelate (L,L-DAP) to meso-diaminopimelate (meso-DAP), a precursor of L-lysine and an essential component of the bacterial peptidoglycan. The sequence is that of Diaminopimelate epimerase from Variovorax paradoxus (strain S110).